Here is a 986-residue protein sequence, read N- to C-terminus: MSFPLAHVDATLNQLAKQLIAHFPEQYQDQIFQHIATDKEKPTSNIGQLRYAIAMSDFFAETLQKQPHFLHQCWQQCPRLQDCEQYAERLTPLLAQVENEEQLYKVLRQFRHREMAKLSFCQSLNLGSVEDIFIRLSQLAESVIIGARDWLYQRACAEMGTPVDEQGTPLQLYILGMGKLGGFELNFSSDIDLIFTYASNGETVGARRSIDNAKFFTRLGQRLINALDQYTCDGFVYRTDMRLRPFGENGALALSFAAMELYYQEQGRDWERYAMIKGRILGANAQDPHVNTLQQLLRPFVYRRYIDFSVLQALRDMKHKIEREVRRRGLVDNIKLGAGGIREIEFIVQVFQLIRGGRESALQQPALLKVLPEISALELISAQQQEDLRQAYLFLRRTENILQAIHDQQTQQLPENTLDQQRLVLATQRFTQWDTQNKLETVTYPIHDWASFCEVLQQHQQNVRTVFDHLIGEEKEELSETETLWHDFLENEIEESEIEQMLIEHHIEERDFHEIIEKLMQFRNEVTRRPIGTRGRIALTQVMPTLLPQIFAHTAYLHLLPRMLNIVDKILTRTTYLELLVENPQALTQLIELCAQSRMIAEQVARHPILLDELLDRNALLNPPPYDHYASELRQYLLRLTPDDEEQMIDGLRQFKQATLLRIAAADILGALPVMKVSDHLTFLAEAIIHVVVELAWQQVTTRFGTPAHLAEGEKGFLVIGYGKLGGIELGYKSDLDLVFLYQSDEQSQTCGGKRSIESNQFYLRLAQKIISIFSINTFAGVLYEVDMRLRPSGESGLLCSSISAFKAYQLHDAWTWEKQALVRSRAIYGEARLQTEFNAIRAEVLSAPRDLATLQQDVVAMRQKMYAHLAHPDSDTFNIKTDRGGITDIEFIAQYLVLAHAPQNPALTRWSDNVRIFEIMAESAVISQEICDQLKQCYVDLRNRIHHLNLLGELSIVPQTEFQTERQFIQTIWHRLFEHNDKYEE.

The segment at 1–475 is adenylyl removase; that stretch reads MSFPLAHVDA…VFDHLIGEEK (475 aa). The interval 481 to 986 is adenylyl transferase; sequence TETLWHDFLE…LFEHNDKYEE (506 aa).

It belongs to the GlnE family. Mg(2+) serves as cofactor.

It carries out the reaction [glutamine synthetase]-O(4)-(5'-adenylyl)-L-tyrosine + phosphate = [glutamine synthetase]-L-tyrosine + ADP. The enzyme catalyses [glutamine synthetase]-L-tyrosine + ATP = [glutamine synthetase]-O(4)-(5'-adenylyl)-L-tyrosine + diphosphate. Involved in the regulation of glutamine synthetase GlnA, a key enzyme in the process to assimilate ammonia. When cellular nitrogen levels are high, the C-terminal adenylyl transferase (AT) inactivates GlnA by covalent transfer of an adenylyl group from ATP to specific tyrosine residue of GlnA, thus reducing its activity. Conversely, when nitrogen levels are low, the N-terminal adenylyl removase (AR) activates GlnA by removing the adenylyl group by phosphorolysis, increasing its activity. The regulatory region of GlnE binds the signal transduction protein PII (GlnB) which indicates the nitrogen status of the cell. The polypeptide is Bifunctional glutamine synthetase adenylyltransferase/adenylyl-removing enzyme (Pasteurella multocida (strain Pm70)).